We begin with the raw amino-acid sequence, 470 residues long: Uronate isomerase (470 aa).

Belongs to the metallo-dependent hydrolases superfamily. Uronate isomerase family.

The catalysed reaction is D-glucuronate = D-fructuronate. It catalyses the reaction aldehydo-D-galacturonate = keto-D-tagaturonate. It functions in the pathway carbohydrate metabolism; pentose and glucuronate interconversion. The polypeptide is Uronate isomerase (Sphingopyxis alaskensis (strain DSM 13593 / LMG 18877 / RB2256) (Sphingomonas alaskensis)).